The chain runs to 802 residues: Osmosensitive cation channel TMEM63C (802 aa).

The Extracellular portion of the chain corresponds to 1 to 35 (MTASPESMGQKFRNMTANECFQSRSTVLQGQPFGG). A helical transmembrane segment spans residues 36-60 (IPTVLLLNIILWVCVVLVYSFLRKA). Topologically, residues 61-124 (AWDYGRLALL…RDRDLINKCG (64 aa)) are cytoplasmic. Phosphoserine occurs at positions 75 and 78. The chain crosses the membrane as a helical span at residues 125–157 (EDARIYIMFQYHLIIFVLILCIPSLGIILPVNY). The Extracellular segment spans residues 158-180 (IGSALDWSSHFGRTTIVNVSTES). A helical membrane pass occupies residues 181-205 (QFLWLHSIFAFMYFLTNFAFMGHHC). Topologically, residues 206 to 401 (LGFVPKKNLH…IIWKHLSIRR (196 aa)) are cytoplasmic. A helical transmembrane segment spans residues 402-431 (FSWWARFIAINTSLFFLFFFLTTPAIIINT). Over 432-446 (IDMYNVTRPIEKLQS) the chain is Extracellular. The chain crosses the membrane as a helical span at residues 447–476 (PVVTQFFPSVLLWAFTVIMPLLVYFSAFLE). The Cytoplasmic portion of the chain corresponds to 477–480 (AHWT). A helical transmembrane segment spans residues 481-517 (RSNQNLIIMYKCYIFLVFMVVILPSMGLTSLDVFLRW). At 518–540 (LFDIYYLEHATIRFQCVFLPDNG) the chain is on the extracellular side. A helical membrane pass occupies residues 541–573 (AFFINYVITSALFGTGMELMRLGSLCTYCTRLF). Residues 574 to 593 (LSRSEPERVHIRKNLAMDFQ) lie on the Cytoplasmic side of the membrane. A helical membrane pass occupies residues 594–612 (FGREYAWMLNVFSVVMAYS). The Extracellular portion of the chain corresponds to 613–615 (ITC). The chain crosses the membrane as a helical span at residues 616–640 (PIIVPFGLLYLCMKHITDRYNMYYS). Over 641–647 (YAPTKLN) the chain is Cytoplasmic. Residues 648–676 (AQIHMAAVYQAIFAPLLGLFWMLFFSILR) form a helical membrane-spanning segment. Topologically, residues 677–681 (VGSLH) are extracellular. A helical membrane pass occupies residues 682-702 (SITLFSLSSIIISVIIAFSGV). Residues 703-802 (FLGKFRIAQQ…EGLELEGQSH (100 aa)) lie on the Cytoplasmic side of the membrane. Residues 753 to 785 (TPASSPARHTYGTMNSQPEEGEEESGLRGFARE) form a disordered region.

Belongs to the CSC1 (TC 1.A.17) family. In terms of assembly, monomer. Expressed in podocytes of kidney glomeruli.

Its subcellular location is the endoplasmic reticulum membrane. The protein localises to the cell membrane. The catalysed reaction is Ca(2+)(in) = Ca(2+)(out). Acts as an osmosensitive cation channel preferentially activated upon hypotonic stress. In contrast to TMEM63B, does not show phospholipid scramblase activity. Enriched in mitochondria-ER contact sites where it may regulate the metabolite flux and organelles' morphologies in response to osmotic changes. In particular may regulate mitochondrial motility and function in motor neuron axons. Required for the functional integrity of the kidney glomerular filtration barrier. This is Osmosensitive cation channel TMEM63C (Tmem63c) from Rattus norvegicus (Rat).